The primary structure comprises 205 residues: Spermatogenesis-associated protein 24 (205 aa).

Residues 17-166 (LALDQLRDVI…QQKQIFRNHM (150 aa)) adopt a coiled-coil conformation. Residues 138–185 (EDILNGKENEIKELQQVISQQKQIFRNHMSDFRIQKQQESYMAQVLDQ) are required for interaction with CBX5 and TBPL1. Residues 180–205 (AQVLDQKHKKASGTRQARSHQHPREK) form a disordered region. Residues 186 to 205 (KHKKASGTRQARSHQHPREK) show a composition bias toward basic residues.

The protein belongs to the SPATA24 family. In terms of assembly, homodimer. Interacts with CBX3, CBX5, GMNN, GTF2B, TBPL1 and the polycomb proteins PHCF2, RNF2 and SCMH1 but not with CBX1 or PCGF2.

The protein localises to the cytoplasm. It is found in the nucleus. Its subcellular location is the nucleolus. It localises to the nucleoplasm. Functionally, binds DNA with high affinity but does not bind to TATA boxes. Synergises with GMNN and TBP in activation of TATA box-containing promoters and with GMNN and TBPL1 in activation of the NF1 TATA-less promoter. May play a role in cytoplasm movement and removal during spermiogenesis. The sequence is that of Spermatogenesis-associated protein 24 (SPATA24) from Homo sapiens (Human).